Here is a 483-residue protein sequence, read N- to C-terminus: Probable glycosyltransferase 4 (483 aa).

Residues 1–26 lie on the Cytoplasmic side of the membrane; sequence MSKLQDRHGGEAAADVGRRARHQRLL. A helical; Signal-anchor for type II membrane protein transmembrane segment spans residues 27-47; it reads LSFPVFPIVLLLLAPCTIFFF. Over 48–483 the chain is Lumenal; sequence TSGDVPLPRI…KKTSRAARPM (436 aa). Residues 71-119 are disordered; sequence AVAADTSPPPPSPPSSSPPPLSFPPPPPPPSSPPPPALPVVDDHSDTQR. Residues 77–108 show a composition bias toward pro residues; sequence SPPPPSPPSSSPPPLSFPPPPPPPSSPPPPAL. A glycan (N-linked (GlcNAc...) asparagine) is linked at N448.

Belongs to the glycosyltransferase 34 family.

It is found in the golgi apparatus membrane. Its function is as follows. Probable glycosyltransferase that may be involved in the biosynthesis of xyloglucan. The chain is Probable glycosyltransferase 4 from Oryza sativa subsp. indica (Rice).